Consider the following 123-residue polypeptide: Large ribosomal subunit protein bL12 (123 aa).

It belongs to the bacterial ribosomal protein bL12 family. In terms of assembly, homodimer. Part of the ribosomal stalk of the 50S ribosomal subunit. Forms a multimeric L10(L12)X complex, where L10 forms an elongated spine to which 2 to 4 L12 dimers bind in a sequential fashion. Binds GTP-bound translation factors.

Its function is as follows. Forms part of the ribosomal stalk which helps the ribosome interact with GTP-bound translation factors. Is thus essential for accurate translation. In Acinetobacter baumannii (strain AB307-0294), this protein is Large ribosomal subunit protein bL12.